Here is a 69-residue protein sequence, read N- to C-terminus: Putative membrane protein insertion efficiency factor (69 aa).

This sequence belongs to the UPF0161 family.

It is found in the cell inner membrane. Could be involved in insertion of integral membrane proteins into the membrane. The protein is Putative membrane protein insertion efficiency factor of Geobacter metallireducens (strain ATCC 53774 / DSM 7210 / GS-15).